The primary structure comprises 113 residues: Death-associated protein-like 1.S (113 aa).

The interval 1–53 is disordered; that stretch reads MTKELKVQSSPQALKAGHLPAVKAGGMRVSKKQGNDENSAPEKNAKKTLQEKP.

It belongs to the DAP-DAPL1 family. In terms of assembly, associates with ribosomes; preventing translation. Interacts with eiF5a (eif5a and eif5a2); preventing translation.

Ribosome-binding protein that promotes ribosome hibernation, a process during which ribosomes are stabilized in an inactive state and preserved from proteasomal degradation. Acts via its association with eiF5a (eif5a and eif5a2) at the polypeptide exit tunnel of the ribosome, preventing mRNA translation. Plays a key role in ribosome hibernation in the mature egg by preventing mRNA translation, leading to ribosome inactivation. Ribosomes, which are produced in large quantities during oogenesis, are stored and translationally repressed in the egg and early embryo. This chain is Death-associated protein-like 1.S (dapl1.S), found in Xenopus laevis (African clawed frog).